A 294-amino-acid chain; its full sequence is Transmembrane protein 178B (294 aa).

An N-terminal signal peptide occupies residues 1-23 (MAAGKLLLYAGLSLSLCALGMLA). 3 helical membrane-spanning segments follow: residues 172–192 (AGFM…GMLG), 206–226 (LLFL…VAGI), and 252–272 (MFCA…CTLA).

It belongs to the TMEM178 family.

The protein localises to the membrane. The polypeptide is Transmembrane protein 178B (tmem178b) (Danio rerio (Zebrafish)).